We begin with the raw amino-acid sequence, 699 residues long: Ribosomal RNA large subunit methyltransferase K/L (699 aa).

The region spanning 44 to 155 (DAYKLCLWSR…RDNVILGIDL (112 aa)) is the THUMP domain.

Belongs to the methyltransferase superfamily. RlmKL family.

The protein resides in the cytoplasm. It carries out the reaction guanosine(2445) in 23S rRNA + S-adenosyl-L-methionine = N(2)-methylguanosine(2445) in 23S rRNA + S-adenosyl-L-homocysteine + H(+). It catalyses the reaction guanosine(2069) in 23S rRNA + S-adenosyl-L-methionine = N(2)-methylguanosine(2069) in 23S rRNA + S-adenosyl-L-homocysteine + H(+). Specifically methylates the guanine in position 2445 (m2G2445) and the guanine in position 2069 (m7G2069) of 23S rRNA. In Alteromonas mediterranea (strain DSM 17117 / CIP 110805 / LMG 28347 / Deep ecotype), this protein is Ribosomal RNA large subunit methyltransferase K/L.